An 879-amino-acid chain; its full sequence is Band 4.1-like protein 1 (879 aa).

The tract at residues 1–64 (MTTETGPDSE…RPAEQSLDME (64 aa)) is disordered. A compositionally biased stretch (low complexity) spans 17–35 (ETPQQPEAAAAVTTPVTPA). Thr-30 is modified (phosphothreonine). The segment covering 38–50 (SHPETNSNEKHLT) has biased composition (basic and acidic residues). At Ser-75 the chain carries Phosphoserine. Thr-79 carries the post-translational modification Phosphothreonine. One can recognise an FERM domain in the interval 97-378 (ATCRVTLLDA…EHHTFFRLVS (282 aa)). A Phosphotyrosine modification is found at Tyr-343. Ser-378, Ser-430, Ser-437, Ser-461, and Ser-466 each carry phosphoserine. The disordered stretch occupies residues 428–501 (SRSLDGAEFS…HKQEFLDKPE (74 aa)). Residues 444–501 (ENHDAGPDGDKREDDAESGGRRSEAEEGEVRTPTKIKELKPEQETTPRHKQEFLDKPE) are compositionally biased toward basic and acidic residues. Thr-475 is modified (phosphothreonine). Residues 483-541 (KPEQETTPRHKQEFLDKPEDVLLKHQASINELKRTLKEPNSKLIHRDRDWERERRLPSS) are spectrin--actin-binding. Phosphoserine is present on Ser-510. The segment covering 514-538 (LKRTLKEPNSKLIHRDRDWERERRL) has biased composition (basic and acidic residues). Disordered regions lie at residues 514–596 (LKRT…FLKD), 633–687 (FEDF…STPE), and 718–742 (SRVSTADSTQVDGGAPAAKDFMTTP). Residues Ser-540, Ser-541, Ser-544, and Ser-546 each carry the phosphoserine modification. Residue Thr-550 is modified to Phosphothreonine. Over residues 550-577 (TPEKASERAGLREGSEEKVKPPRPRAPE) the composition is skewed to basic and acidic residues. A phosphoserine mark is found at Ser-564 and Ser-578. At Thr-580 the chain carries Phosphothreonine. 11 positions are modified to phosphoserine: Glu-583, Gln-587, Ser-639, Ser-648, Ser-650, Ser-665, Ser-666, Asp-669, Ser-671, Ser-677, and Ser-684. A compositionally biased stretch (basic and acidic residues) spans 635–650 (DFSRSLPELDRDKSDS). Thr-685 bears the Phosphothreonine mark. Residues 718-728 (SRVSTADSTQV) show a composition bias toward polar residues. 5 positions are modified to phosphoserine: Ser-721, Pro-742, Ala-766, Ser-782, and Ser-868. Residues 744–879 (CITTETISTT…EERDKKPQES (136 aa)) are C-terminal (CTD).

As to quaternary structure, interacts with AGAP2. As to expression, highest expression in brain, lower in heart and kidney. Within the brain, highest expression in cerebellum.

The protein resides in the cytoplasm. It is found in the cytoskeleton. Functionally, may function to confer stability and plasticity to neuronal membrane via multiple interactions, including the spectrin-actin-based cytoskeleton, integral membrane channels and membrane-associated guanylate kinases. This Rattus norvegicus (Rat) protein is Band 4.1-like protein 1.